The chain runs to 1261 residues: Apoptotic protease-activating factor 1 (1261 aa).

Residues 1–90 (MEERARSRLL…GDLASLLHSD (90 aa)) form the CARD domain. Residues 106-417 (VSPSVQAILS…LELEEVEDVL (312 aa)) form the NB-ARC domain. 154-161 (GMAGSGKS) contributes to the ATP binding site. 13 WD repeats span residues 615–654 (PHQGAVYYACFSKDGSKIASCGASKALRVFKSTSGEKLLE), 657–696 (AHEEDVLCCAFSPDDRHIATCASDRKVKLWNVERGVLIRE), 700–743 (EHEE…SQNT), 746–785 (GHMEPVNHCCFSPNDLYLATSSSDGSLKLFEVSSANEWKS), 798–836 (EIKAMVKCSTWSADGSQIICAARNTVFVFDVETSDLLLK), 840–879 (SRLSTIQFCHACPNSSLLAVALSHYTVELWNFESSKKKAE), 882–921 (GHLSWVHCVQFSPDGSLLLSSSDDQTIRLWETDRVHTSSA), 964–1003 (ELSSRIRCSCISRNAAFVALGSEDGTVQVIEVPSSKASVK), 1006–1045 (GHTKTVHHCQFTDDCEILITSSEDSTIRVWKWRTGECMVL), 1047–1088 (GHME…MLQD), 1091–1130 (CHEGAVLSCDVSSDGRLFATTSANRTAKVWSSASWKMLFL), 1133–1172 (GHKDCVRSCRFSWDNKRLATGDDNGEIRLWSMLDGALLKI), and 1184–1223 (YHAGWVTDLHFSPDNRVLVSTAGYIKWWSVESGEALQTFY).

In terms of assembly, monomer. Oligomerizes upon binding of cytochrome c and dATP.

The protein localises to the cytoplasm. In terms of biological role, oligomeric Apaf-1 mediates the cytochrome c-dependent autocatalytic activation of pro-caspase-9 (Apaf-3), leading to the activation of caspase-3 and apoptosis. This activation requires ATP. In Danio rerio (Zebrafish), this protein is Apoptotic protease-activating factor 1 (apaf1).